Consider the following 283-residue polypeptide: Ubiquinone biosynthesis protein COQ4, mitochondrial (283 aa).

A mitochondrion-targeting transit peptide spans 1–25 (MAIAKSVRARAVGLRSLRVLCAQRS). Residues His-166, Asp-167, His-170, and Glu-182 each contribute to the Zn(2+) site.

This sequence belongs to the COQ4 family. As to quaternary structure, component of a multi-subunit COQ enzyme complex, composed of at least COQ3, COQ4, COQ5, COQ6, COQ7 and COQ9. Requires Zn(2+) as cofactor.

The protein resides in the mitochondrion inner membrane. The catalysed reaction is a 4-hydroxy-3-methoxy-5-(all-trans-polyprenyl)benzoate + H(+) = a 2-methoxy-6-(all-trans-polyprenyl)phenol + CO2. It functions in the pathway cofactor biosynthesis; ubiquinone biosynthesis. Its function is as follows. Lyase that catalyzes the C1-decarboxylation of 4-hydroxy-3-methoxy-5-(all-trans-polyprenyl)benzoic acid into 2-methoxy-6-(all-trans-polyprenyl)phenol during ubiquinone biosynthesis. The polypeptide is Ubiquinone biosynthesis protein COQ4, mitochondrial (Coccidioides immitis (strain RS) (Valley fever fungus)).